We begin with the raw amino-acid sequence, 418 residues long: NADH-quinone oxidoreductase subunit D (418 aa).

It belongs to the complex I 49 kDa subunit family. NDH-1 is composed of 14 different subunits. Subunits NuoB, C, D, E, F, and G constitute the peripheral sector of the complex.

The protein localises to the cell inner membrane. The catalysed reaction is a quinone + NADH + 5 H(+)(in) = a quinol + NAD(+) + 4 H(+)(out). NDH-1 shuttles electrons from NADH, via FMN and iron-sulfur (Fe-S) centers, to quinones in the respiratory chain. The immediate electron acceptor for the enzyme in this species is believed to be ubiquinone. Couples the redox reaction to proton translocation (for every two electrons transferred, four hydrogen ions are translocated across the cytoplasmic membrane), and thus conserves the redox energy in a proton gradient. The sequence is that of NADH-quinone oxidoreductase subunit D from Bordetella pertussis (strain Tohama I / ATCC BAA-589 / NCTC 13251).